A 203-amino-acid chain; its full sequence is MSKRQSAKYKLDRRMGENIWGRPKSPVNRREYGPGQHGQRRKGKMSDFGIQLRAKQKLKGYYGDITEKQFKKNYIEASRMKGDTGQNLIGLLERRLDAVVYRAKFTPTIFSARQLVSHGHVYVNGVKCNIASRLVKPGDEITLGKKAQEMALVAEAQSLPERDLPEYLAVDGTKATYVRVPTLDEVPYPVKMEPNLVVEFYSR.

Residues Met-1–Ser-46 form a disordered region. In terms of domain architecture, S4 RNA-binding spans Arg-94 to Gln-157.

Belongs to the universal ribosomal protein uS4 family. In terms of assembly, part of the 30S ribosomal subunit. Contacts protein S5. The interaction surface between S4 and S5 is involved in control of translational fidelity.

Its function is as follows. One of the primary rRNA binding proteins, it binds directly to 16S rRNA where it nucleates assembly of the body of the 30S subunit. Functionally, with S5 and S12 plays an important role in translational accuracy. This is Small ribosomal subunit protein uS4 from Sphingopyxis alaskensis (strain DSM 13593 / LMG 18877 / RB2256) (Sphingomonas alaskensis).